A 160-amino-acid chain; its full sequence is Putative pre-16S rRNA nuclease (160 aa).

It belongs to the YqgF nuclease family.

The protein localises to the cytoplasm. Its function is as follows. Could be a nuclease involved in processing of the 5'-end of pre-16S rRNA. This is Putative pre-16S rRNA nuclease from Jannaschia sp. (strain CCS1).